The primary structure comprises 281 residues: Diaminopimelate epimerase (281 aa).

The substrate site is built by N13, Q46, and N66. The active-site Proton donor is the C75. Substrate contacts are provided by residues 76 to 77 (GN), N160, N193, and 211 to 212 (ER). C220 functions as the Proton acceptor in the catalytic mechanism. Position 221 to 222 (221 to 222 (GT)) interacts with substrate.

This sequence belongs to the diaminopimelate epimerase family. As to quaternary structure, homodimer.

It is found in the cytoplasm. It carries out the reaction (2S,6S)-2,6-diaminopimelate = meso-2,6-diaminopimelate. It functions in the pathway amino-acid biosynthesis; L-lysine biosynthesis via DAP pathway; DL-2,6-diaminopimelate from LL-2,6-diaminopimelate: step 1/1. Its function is as follows. Catalyzes the stereoinversion of LL-2,6-diaminopimelate (L,L-DAP) to meso-diaminopimelate (meso-DAP), a precursor of L-lysine and an essential component of the bacterial peptidoglycan. The protein is Diaminopimelate epimerase of Acinetobacter baumannii (strain ATCC 17978 / DSM 105126 / CIP 53.77 / LMG 1025 / NCDC KC755 / 5377).